Here is a 166-residue protein sequence, read N- to C-terminus: Peptide methionine sulfoxide reductase MsrA (166 aa).

The active site involves cysteine 11.

It belongs to the MsrA Met sulfoxide reductase family.

It carries out the reaction L-methionyl-[protein] + [thioredoxin]-disulfide + H2O = L-methionyl-(S)-S-oxide-[protein] + [thioredoxin]-dithiol. The enzyme catalyses [thioredoxin]-disulfide + L-methionine + H2O = L-methionine (S)-S-oxide + [thioredoxin]-dithiol. In terms of biological role, has an important function as a repair enzyme for proteins that have been inactivated by oxidation. Catalyzes the reversible oxidation-reduction of methionine sulfoxide in proteins to methionine. The chain is Peptide methionine sulfoxide reductase MsrA from Lachnoclostridium phytofermentans (strain ATCC 700394 / DSM 18823 / ISDg) (Clostridium phytofermentans).